A 606-amino-acid polypeptide reads, in one-letter code: Serine/threonine-protein kinase A-Raf (606 aa).

In terms of domain architecture, RBD spans 19-91; it reads GTVKVYLPNK…DGEELIVEVL (73 aa). Residues 98-144 form a Phorbol-ester/DAG-type zinc finger; that stretch reads MHNFVRKTFFSLAFCDFCLKFLFHGFRCQTCGYKFHQHCSSKVPTVC. 8 residues coordinate Zn(2+): histidine 99, cysteine 112, cysteine 115, cysteine 125, cysteine 128, histidine 133, cysteine 136, and cysteine 144. A phosphoserine mark is found at serine 157 and serine 162. Disordered regions lie at residues 158-207 and 241-290; these read VQDL…NAPL and TDAA…DKKK. The residue at position 181 (threonine 181) is a Phosphothreonine. Phosphoserine is present on residues serine 186, serine 257, and serine 269. Positions 254–267 are enriched in low complexity; sequence PRGSPSPASVSSGR. Basic and acidic residues predominate over residues 274-289; the sequence is SPSEQRERKSLADDKK. Residues 310 to 570 form the Protein kinase domain; sequence VQLLKRIGTG…PQILATIELL (261 aa). ATP is bound by residues 316-324 and lysine 336; that span reads IGTGSFGTV. The residue at position 318 (threonine 318) is a Phosphothreonine. The active-site Proton acceptor is aspartate 429.

It belongs to the protein kinase superfamily. TKL Ser/Thr protein kinase family. RAF subfamily. Interacts with TH1L/NELFD. It depends on Zn(2+) as a cofactor. Dephosphorylation by the SHOC2-MRAS-PP1c (SMP) complex consisting of SHOC2, GTP-bound M-Ras/MRAS and the catalytic subunit of protein phosphatase 1 (PPP1CA, PPP1CB or PPP1CC); this relieves inactivation and stimulates kinase activity.

It carries out the reaction L-seryl-[protein] + ATP = O-phospho-L-seryl-[protein] + ADP + H(+). It catalyses the reaction L-threonyl-[protein] + ATP = O-phospho-L-threonyl-[protein] + ADP + H(+). Functionally, involved in the transduction of mitogenic signals from the cell membrane to the nucleus. May also regulate the TOR signaling cascade. Phosphorylates PFKFB2. The polypeptide is Serine/threonine-protein kinase A-Raf (ARAF) (Sus scrofa (Pig)).